A 658-amino-acid chain; its full sequence is DNA ligase (658 aa).

Residues 32–36 (DAVYD) and 81–82 (SL) each bind NAD(+). Lys-112 acts as the N6-AMP-lysine intermediate in catalysis. NAD(+) contacts are provided by Arg-133, Glu-167, and Lys-306. Cys-400, Cys-403, Cys-416, and Cys-421 together coordinate Zn(2+). The region spanning 577 to 658 (ESSSVFNNKT…LKRLKKLDQN (82 aa)) is the BRCT domain.

It belongs to the NAD-dependent DNA ligase family. LigA subfamily. It depends on Mg(2+) as a cofactor. The cofactor is Mn(2+).

It carries out the reaction NAD(+) + (deoxyribonucleotide)n-3'-hydroxyl + 5'-phospho-(deoxyribonucleotide)m = (deoxyribonucleotide)n+m + AMP + beta-nicotinamide D-nucleotide.. DNA ligase that catalyzes the formation of phosphodiester linkages between 5'-phosphoryl and 3'-hydroxyl groups in double-stranded DNA using NAD as a coenzyme and as the energy source for the reaction. It is essential for DNA replication and repair of damaged DNA. The sequence is that of DNA ligase from Helicobacter pylori (strain G27).